Consider the following 282-residue polypeptide: Protoheme IX farnesyltransferase (282 aa).

Transmembrane regions (helical) follow at residues 9–29, 39–59, 79–99, 102–122, 139–159, 165–185, 210–230, 231–251, and 261–281; these read LAKP…FLLA, LPLF…GCVF, LVTG…LLIL, LVLY…GFIV, VLGG…VVNI, LALF…IAML, IMLF…VLGS, ADLF…YKSI, and VFAK…CLTM.

This sequence belongs to the UbiA prenyltransferase family. Protoheme IX farnesyltransferase subfamily.

The protein localises to the cell inner membrane. The catalysed reaction is heme b + (2E,6E)-farnesyl diphosphate + H2O = Fe(II)-heme o + diphosphate. It participates in porphyrin-containing compound metabolism; heme O biosynthesis; heme O from protoheme: step 1/1. Converts heme B (protoheme IX) to heme O by substitution of the vinyl group on carbon 2 of heme B porphyrin ring with a hydroxyethyl farnesyl side group. The protein is Protoheme IX farnesyltransferase of Francisella tularensis subsp. holarctica (strain LVS).